The sequence spans 89 residues: uncharacterized protein (89 aa).

Composition is skewed to basic residues over residues 1–17 and 65–89; these read MPPH…HGHH and HHGH…HGHH. Disordered regions lie at residues 1-25 and 60-89; these read MPPH…ITPV and LETG…HGHH.

This is an uncharacterized protein from Dictyostelium discoideum (Social amoeba).